Consider the following 268-residue polypeptide: Ribonuclease P protein subunit p30 (268 aa).

Alanine 2 carries the post-translational modification N-acetylalanine. Serine 251 bears the Phosphoserine mark.

Belongs to the eukaryotic/archaeal RNase P protein component 3 family. As to quaternary structure, component of nuclear RNase P and RNase MRP ribonucleoproteins. RNase P consists of a catalytic RNA moiety and about 10 protein subunits; POP1, POP4, POP5, POP7, RPP14, RPP21, RPP25, RPP30, RPP38 and RPP40. Within the RNase P complex, POP1, POP7 and RPP25 form the 'finger' subcomplex, POP5, RPP14, RPP40 and homodimeric RPP30 form the 'palm' subcomplex, and RPP21, POP4 and RPP38 form the 'wrist' subcomplex. All subunits of the RNase P complex interact with the catalytic RNA. Several subunits of RNase P are also part of the RNase MRP complex. RNase MRP consists of a catalytic RNA moiety and about 8 protein subunits; POP1, POP7, RPP25, RPP30, RPP38, RPP40 and possibly also POP4 and POP5.

It localises to the nucleus. Its subcellular location is the nucleolus. In terms of biological role, component of ribonuclease P, a ribonucleoprotein complex that generates mature tRNA molecules by cleaving their 5'-ends. Also a component of the MRP ribonuclease complex, which cleaves pre-rRNA sequences. The chain is Ribonuclease P protein subunit p30 (RPP30) from Bos taurus (Bovine).